The chain runs to 409 residues: 4-hydroxy-3-methylbut-2-en-1-yl diphosphate synthase (ferredoxin) (409 aa).

Residues 1 to 12 are compositionally biased toward polar residues; that stretch reads MQTLDRPNAPTQ. Positions 1 to 22 are disordered; sequence MQTLDRPNAPTQQPYPEPVYPR. [4Fe-4S] cluster is bound by residues Cys314, Cys317, Cys348, and Glu355.

This sequence belongs to the IspG family. [4Fe-4S] cluster is required as a cofactor.

The catalysed reaction is (2E)-4-hydroxy-3-methylbut-2-enyl diphosphate + 2 oxidized [2Fe-2S]-[ferredoxin] + H2O = 2-C-methyl-D-erythritol 2,4-cyclic diphosphate + 2 reduced [2Fe-2S]-[ferredoxin] + H(+). It participates in isoprenoid biosynthesis; isopentenyl diphosphate biosynthesis via DXP pathway; isopentenyl diphosphate from 1-deoxy-D-xylulose 5-phosphate: step 5/6. In terms of biological role, converts 2C-methyl-D-erythritol 2,4-cyclodiphosphate (ME-2,4cPP) into 1-hydroxy-2-methyl-2-(E)-butenyl 4-diphosphate. The protein is 4-hydroxy-3-methylbut-2-en-1-yl diphosphate synthase (ferredoxin) of Synechococcus sp. (strain JA-2-3B'a(2-13)) (Cyanobacteria bacterium Yellowstone B-Prime).